Reading from the N-terminus, the 564-residue chain is MFS-type efflux pump LUC4 (564 aa).

Over residues 1 to 15 (MGQSQDNTQLTTASP) the composition is skewed to polar residues. Residues 1 to 35 (MGQSQDNTQLTTASPQAEKDLSSNDNPPESEPAAP) form a disordered region. 5 helical membrane passes run 42-62 (WLVF…TSII), 78-98 (LYVW…PIFA), 108-128 (SLTL…GGAH), 141-161 (GVGG…MVSV), and 170-190 (IIGG…GAFA). N-linked (GlcNAc...) asparagine glycosylation occurs at asparagine 192. 3 helical membrane passes run 197–217 (WIFY…IVFL), 236–256 (WGGS…LSWG), and 268–288 (LVPL…QGAP). Asparagine 302 carries an N-linked (GlcNAc...) asparagine glycan. Helical transmembrane passes span 308–328 (LFVI…FLPV), 343–363 (VMLF…GIFI), 371–391 (VWHF…TLLD), 404–424 (LLFG…ILAS), and 436–456 (AWTF…AAAF). N-linked (GlcNAc...) asparagine glycosylation occurs at asparagine 461. A helical transmembrane segment spans residues 512–532 (KLVWQVSIAFSVLGFVLAFLV).

It belongs to the major facilitator superfamily. TCR/Tet family.

The protein localises to the membrane. MFS-type efflux pump; part of the gene cluster that mediates the biosynthesis of the mycotoxin lucilactaene and the lucilactaene-related compound NG-391 that act as cell cycle inhibitors with potent growth inhibitory activity against malarial parasites, moderate growth inhibitory activity against cancer cells, and no activity against bacteria and fungi. In Fusarium sp, this protein is MFS-type efflux pump LUC4.